We begin with the raw amino-acid sequence, 474 residues long: tRNA-2-methylthio-N(6)-dimethylallyladenosine synthase (474 aa).

The 118-residue stretch at 3 to 120 folds into the MTTase N-terminal domain; that stretch reads KKLHIKTWGC…LPEMIEQIQQ (118 aa). 6 residues coordinate [4Fe-4S] cluster: Cys-12, Cys-49, Cys-83, Cys-157, Cys-161, and Cys-164. The Radical SAM core domain maps to 143–375; it reads RAEGPSAFVS…QDRITQQAMR (233 aa). Residues 378–441 form the TRAM domain; that stretch reads RQMLGTVQRI…TNSLRGKFIR (64 aa).

It belongs to the methylthiotransferase family. MiaB subfamily. Monomer. It depends on [4Fe-4S] cluster as a cofactor.

It localises to the cytoplasm. It carries out the reaction N(6)-dimethylallyladenosine(37) in tRNA + (sulfur carrier)-SH + AH2 + 2 S-adenosyl-L-methionine = 2-methylsulfanyl-N(6)-dimethylallyladenosine(37) in tRNA + (sulfur carrier)-H + 5'-deoxyadenosine + L-methionine + A + S-adenosyl-L-homocysteine + 2 H(+). Its function is as follows. Catalyzes the methylthiolation of N6-(dimethylallyl)adenosine (i(6)A), leading to the formation of 2-methylthio-N6-(dimethylallyl)adenosine (ms(2)i(6)A) at position 37 in tRNAs that read codons beginning with uridine. The chain is tRNA-2-methylthio-N(6)-dimethylallyladenosine synthase from Shewanella loihica (strain ATCC BAA-1088 / PV-4).